The following is a 101-amino-acid chain: Protein S100-A7 (101 aa).

Position 2 is an N-acetylserine (Ser2). 2 EF-hand domains span residues 13–48 (MIDMFHKYTRRDDKIEKPSLLTMMKENFPNFLSACD) and 50–85 (KGTNYLADVFEKKDKNEDKKIDFSEFLSLLGDIATD). His18 and Asp25 together coordinate Zn(2+). The cysteines at positions 47 and 96 are disulfide-linked. Residues Asp63, Asn65, Asp67, Lys69, and Glu74 each coordinate Ca(2+). Residues His87 and His91 each contribute to the Zn(2+) site.

In terms of assembly, interacts with RANBP9. Fetal ear, skin, and tongue and human cell lines. Highly up-regulated in psoriatic epidermis. Also highly expressed in the urine of bladder squamous cell carcinoma (SCC) bearing patients.

The protein resides in the cytoplasm. It localises to the secreted. The chain is Protein S100-A7 (S100A7) from Homo sapiens (Human).